A 104-amino-acid chain; its full sequence is Large ribosomal subunit protein uL24 (104 aa).

Belongs to the universal ribosomal protein uL24 family. In terms of assembly, part of the 50S ribosomal subunit.

One of two assembly initiator proteins, it binds directly to the 5'-end of the 23S rRNA, where it nucleates assembly of the 50S subunit. Its function is as follows. One of the proteins that surrounds the polypeptide exit tunnel on the outside of the subunit. The protein is Large ribosomal subunit protein uL24 of Methylorubrum extorquens (strain PA1) (Methylobacterium extorquens).